Reading from the N-terminus, the 425-residue chain is Histone-binding protein RBBP4 (425 aa).

Residue A2 is modified to N-acetylalanine. Position 4 is an N6-acetyllysine; alternate (K4). A Glycyl lysine isopeptide (Lys-Gly) (interchain with G-Cter in SUMO2); alternate cross-link involves residue K4. Residue K4 forms a Glycyl lysine isopeptide (Lys-Gly) (interchain with G-Cter in ubiquitin); alternate linkage. 7 WD repeats span residues 32–125 (YDLV…NHEG), 126–175 (EVNR…RLRG), 176–223 (HQKE…KTIF), 225–270 (GHTA…HSVD), 271–314 (AHTA…HSFE), 315–371 (SHKD…FIHG), and 372–404 (GHTA…VWQM). A Phosphoserine modification is found at S110. The residue at position 160 (K160) is an N6-acetyllysine; alternate. K160 participates in a covalent cross-link: Glycyl lysine isopeptide (Lys-Gly) (interchain with G-Cter in SUMO2); alternate. S355 is modified (phosphoserine).

Belongs to the WD repeat RBAP46/RBAP48/MSI1 family. In terms of assembly, binds directly to helix 1 of the histone fold of histone H4, a region that is not accessible when H4 is in chromatin. Subunit of the chromatin assembly factor 1 (CAF-1) complex, which is composed of RBBP4, CHAF1B and CHAF1A. Subunit of the core histone deacetylase (HDAC) complex, which is composed of HDAC1, HDAC2, RBBP4 and RBBP7. The core HDAC complex associates with SIN3A, ARID4B/SAP180, SAP18, SAP30, SAP130, SUDS3/SAP45 and possibly ARID4A/RBP1 and ING1 to form the SIN3 HDAC complex. Component of the nucleosome remodeling and deacetylase (NuRD) repressor complex, composed of core proteins MTA1, MTA2, MTA3, RBBP4, RBBP7, HDAC1, HDAC2, MBD2, MBD3, and peripherally associated proteins CDK2AP1, CDK2AP2, GATAD2A, GATAD2B, CHD3, CHD4 and CHD5. The exact stoichiometry of the NuRD complex is unknown, and some subunits such as MBD2 and MBD3, GATAD2A and GATAD2B, and CHD3, CHD4 and CHD5 define mutually exclusive NuRD complexes. Interacts with ZNF512B; the interaction is direct and may play a role in repressing gene expression. The NuRD complex may also interact with MBD3L1 and MBD3L2. Component of the PRC2 complex, which consists of the core subunits EED, EZH1 or EZH2, SUZ12, and RBBP4, and various combinations of accessory subunits including AEBP2, JARID2, PHF19, MTF2 and EPOP. Forms a monomeric PRC2.2 (class 2) complex consisting of at least SUZ12, RBBP4, AEBP2 and JARID2. Forms a dimeric PRC2.1 (class 1, PRC-PCL) complex consisting of at least SUZ12, RBBP4, and PHF19; PHF19 stabilizes the dimeric structure which enhances PRC2 interaction with chromatin. Component of the NURF-1 ISWI chromatin remodeling complex (also called the nucleosome-remodeling factor (NURF) complex) at least composed of SMARCA1 (isoform 2), BPTF, RBBP4 and RBBP7. Within the complex interacts with isoform 2 of SMARCA1. Component of the BPFT-SMARCA1 complex at least composed of SMARCA1 (isoform 1), BPFT, RBBP4 and RBBP7; the complex is catalytically inactive and does not remodel chromatin. Within the complex interacts with isoform 1 of SMARCA1. Interacts with the ISWI chromatin remodeling complex component SMARCA5; the interaction is direct. Interacts with the viral protein-binding domain of the retinoblastoma protein (RB1). Component of the DREAM complex (also named LINC complex) at least composed of E2F4, E2F5, LIN9, LIN37, LIN52, LIN54, MYBL1, MYBL2, RBL1, RBL2, RBBP4, TFDP1 and TFDP2. The complex exists in quiescent cells where it represses cell cycle-dependent genes. It dissociates in S phase when LIN9, LIN37, LIN52 and LIN54 form a subcomplex that binds to MYBL2. Found in a complex composed of at least SINHCAF, SIN3A, HDAC1, SAP30, RBBP4, OGT and TET1. Interacts with ZNF827; the interaction is direct and recruits RBBP4 to telomeres. Interacts with MTA1; the interaction is direct and mutually exclusive with binding histone H4. Interacts with ARMC12 (via ARM domains). Interacts with BRCA1. Interacts with CDK2AP1. Interacts with CREBBP, and this interaction may be enhanced by the binding of phosphorylated CREB1 to CREBBP. Interacts with ERCC6. Interacts with HDAC7. Interacts with PHF6. Interacts with PWWP2B. Interacts with SPEN/MINT. Interacts with SUV39H1.

It is found in the nucleus. It localises to the chromosome. Its subcellular location is the telomere. Core histone-binding subunit that may target chromatin assembly factors, chromatin remodeling factors and histone deacetylases to their histone substrates in a manner that is regulated by nucleosomal DNA. Component of the chromatin assembly factor 1 (CAF-1) complex, which is required for chromatin assembly following DNA replication and DNA repair. Component of the core histone deacetylase (HDAC) complex, which promotes histone deacetylation and consequent transcriptional repression. Component of the nucleosome remodeling and histone deacetylase complex (the NuRD complex), which promotes transcriptional repression by histone deacetylation and nucleosome remodeling. Component of the PRC2 complex, which promotes repression of homeotic genes during development. Component of the NURF (nucleosome remodeling factor) complex. In Bos taurus (Bovine), this protein is Histone-binding protein RBBP4 (RBBP4).